We begin with the raw amino-acid sequence, 327 residues long: L-lactate dehydrogenase (327 aa).

Residues V18, D39, K44, Y69, and 83-84 (GA) each bind NAD(+). Substrate is bound by residues Q86, R92, and 124 to 127 (NPVD). NAD(+)-binding positions include 122 to 124 (AAN) and S147. 152 to 155 (DSAR) provides a ligand contact to substrate. Residues R157 and H172 each coordinate beta-D-fructose 1,6-bisphosphate. H179 serves as the catalytic Proton acceptor. Y224 carries the post-translational modification Phosphotyrosine. T233 contacts substrate.

It belongs to the LDH/MDH superfamily. LDH family. Homotetramer.

The protein localises to the cytoplasm. The catalysed reaction is (S)-lactate + NAD(+) = pyruvate + NADH + H(+). It participates in fermentation; pyruvate fermentation to lactate; (S)-lactate from pyruvate: step 1/1. Allosterically activated by fructose 1,6-bisphosphate (FBP). Its function is as follows. Catalyzes the conversion of lactate to pyruvate. This Streptococcus pyogenes serotype M3 (strain SSI-1) protein is L-lactate dehydrogenase.